A 130-amino-acid chain; its full sequence is Small ribosomal subunit protein uS9 (130 aa).

Belongs to the universal ribosomal protein uS9 family.

The polypeptide is Small ribosomal subunit protein uS9 (Janthinobacterium sp. (strain Marseille) (Minibacterium massiliensis)).